Here is a 139-residue protein sequence, read N- to C-terminus: Large ribosomal subunit protein bL17 (139 aa).

Belongs to the bacterial ribosomal protein bL17 family. In terms of assembly, part of the 50S ribosomal subunit. Contacts protein L32.

The polypeptide is Large ribosomal subunit protein bL17 (Azorhizobium caulinodans (strain ATCC 43989 / DSM 5975 / JCM 20966 / LMG 6465 / NBRC 14845 / NCIMB 13405 / ORS 571)).